Here is a 213-residue protein sequence, read N- to C-terminus: MRIVLLTGFEPFDQDPVNPSWEAVRQLDGVQLGSDVKIVARRLPCAFATAGECLTRLIDELHPAMVIATGLGPGRSDISVERVAININDARIPDNLGEQPIDTAVVADGPAAFFTTLPIKAMVKAVREAGIAASVSQTAGTFVCNQVFYLLQHALAGSGVRSGFIHVPFLPEQVAGSQRPSMALDAMVAGLQAAVLTAWHTPVDVKEAGGQVS.

Residues Glu81, Cys144, and His166 contribute to the active site.

It belongs to the peptidase C15 family. As to quaternary structure, homodimer.

The protein localises to the cytoplasm. The enzyme catalyses Release of an N-terminal pyroglutamyl group from a polypeptide, the second amino acid generally not being Pro.. Removes 5-oxoproline from various penultimate amino acid residues except L-proline. In Pseudomonas fluorescens, this protein is Pyrrolidone-carboxylate peptidase (pcp).